Reading from the N-terminus, the 240-residue chain is Large ribosomal subunit protein uL1c (240 aa).

It belongs to the universal ribosomal protein uL1 family. Part of the 50S ribosomal subunit.

The protein localises to the plastid. The protein resides in the chloroplast. In terms of biological role, binds directly to 23S rRNA. Might be involved in E site tRNA release (Potential). The chain is Large ribosomal subunit protein uL1c (rpl1) from Cyanidium caldarium (Red alga).